The following is an 88-amino-acid chain: Exodeoxyribonuclease 7 small subunit (88 aa).

The tract at residues 69-88 (ALAEEADPEDGASGADGGGA) is disordered.

This sequence belongs to the XseB family. As to quaternary structure, heterooligomer composed of large and small subunits.

The protein localises to the cytoplasm. The enzyme catalyses Exonucleolytic cleavage in either 5'- to 3'- or 3'- to 5'-direction to yield nucleoside 5'-phosphates.. Functionally, bidirectionally degrades single-stranded DNA into large acid-insoluble oligonucleotides, which are then degraded further into small acid-soluble oligonucleotides. The sequence is that of Exodeoxyribonuclease 7 small subunit from Streptomyces coelicolor (strain ATCC BAA-471 / A3(2) / M145).